Reading from the N-terminus, the 293-residue chain is Probable E3 ubiquitin-protein ligase RNF144A-A (293 aa).

The TRIAD supradomain stretch occupies residues 16-237 (PLVSCKLCLG…YDKGPCRNKL (222 aa)). The Zn(2+) site is built by Cys20, Cys23, Cys43, Cys46, Cys111, Cys116, Cys135, Cys138, Cys143, Cys146, His151, Cys156, Cys186, and Cys189. The segment at 20 to 70 (CKLCLGEFPLEQMTTITQCQCVFCTMCLKQYVELLIKEGFETAISCPDSAC) adopts an RING-type 1 zinc-finger fold. An IBR-type zinc finger spans residues 91 to 156 (QRYRKLQFEK…KASWHPDQDC (66 aa)). An RING-type 2; atypical zinc finger spans residues 186-215 (CPKCKVYIERDEGCAQMMCKNCKHAFCWYC). Cys199 is a catalytic residue. Residues Cys204, Cys207, Cys212, Cys215, His227, and Cys233 each coordinate Zn(2+). The chain crosses the membrane as a helical span at residues 251–271 (VVGIFAGFGLLLLVASPFLLL).

It belongs to the RBR family. RNF144 subfamily.

The protein resides in the membrane. It catalyses the reaction [E2 ubiquitin-conjugating enzyme]-S-ubiquitinyl-L-cysteine + [acceptor protein]-L-lysine = [E2 ubiquitin-conjugating enzyme]-L-cysteine + [acceptor protein]-N(6)-ubiquitinyl-L-lysine.. Its pathway is protein modification; protein ubiquitination. In terms of biological role, E3 ubiquitin-protein ligase which accepts ubiquitin from E2 ubiquitin-conjugating enzymes ube2l3 and ube2l6 in the form of a thioester and then directly transfers the ubiquitin to targeted substrates. The polypeptide is Probable E3 ubiquitin-protein ligase RNF144A-A (rnf144aa) (Danio rerio (Zebrafish)).